Consider the following 238-residue polypeptide: MWNYLSLLPVILFLWAIAGIWIVFAIAVVNGSVDLNEGFPFISICGSYAPQSCIFGQVLNIGAALTVWICIVRHHQLRDWGVKTWQNQLILWSGILCALGTSIVGNFQDKNQKPTHLAGAFLAFILGNLYFWLQFFLSWWVKGLPQPGPHWIKSLRLSLCSLSTILIVAMIVLHALHMRSASAICEWVVAMLLFMLFGFFAVDFSILRGCTLHLHPRLDSSLPQAPSGSPNIQMAQVL.

Residues 1–8 (MWNYLSLL) lie on the Cytoplasmic side of the membrane. A helical membrane pass occupies residues 9–29 (PVILFLWAIAGIWIVFAIAVV). Asn30 carries N-linked (GlcNAc...) asparagine glycosylation. Over 30 to 51 (NGSVDLNEGFPFISICGSYAPQ) the chain is Extracellular. The helical transmembrane segment at 52-72 (SCIFGQVLNIGAALTVWICIV) threads the bilayer. The Cytoplasmic segment spans residues 73–86 (RHHQLRDWGVKTWQ). A helical transmembrane segment spans residues 87–107 (NQLILWSGILCALGTSIVGNF). Topologically, residues 108 to 116 (QDKNQKPTH) are extracellular. Residues 117-137 (LAGAFLAFILGNLYFWLQFFL) form a helical membrane-spanning segment. Over 138–156 (SWWVKGLPQPGPHWIKSLR) the chain is Cytoplasmic. A helical transmembrane segment spans residues 157 to 177 (LSLCSLSTILIVAMIVLHALH). Topologically, residues 178-186 (MRSASAICE) are extracellular. Residues 187–207 (WVVAMLLFMLFGFFAVDFSIL) traverse the membrane as a helical segment. Residues 208–238 (RGCTLHLHPRLDSSLPQAPSGSPNIQMAQVL) lie on the Cytoplasmic side of the membrane.

It belongs to the DRAM/TMEM150 family.

It localises to the cell membrane. The protein resides in the endosome membrane. The protein localises to the cytoplasmic vesicle. Its subcellular location is the autophagosome membrane. Modulator of macroautophagy that causes accumulation of autophagosomes under basal conditions and enhances autophagic flux. Represses cell death and promotes long-term clonogenic survival of cells grown in the absence of glucose in a macroautophagy-independent manner. May have some role in extracellular matrix engulfment or growth factor receptor recycling, both of which can modulate cell survival. The chain is Modulator of macroautophagy TMEM150B from Mus musculus (Mouse).